The primary structure comprises 230 residues: Phosphoribosylaminoimidazole-succinocarboxamide synthase (230 aa).

The protein belongs to the SAICAR synthetase family.

The enzyme catalyses 5-amino-1-(5-phospho-D-ribosyl)imidazole-4-carboxylate + L-aspartate + ATP = (2S)-2-[5-amino-1-(5-phospho-beta-D-ribosyl)imidazole-4-carboxamido]succinate + ADP + phosphate + 2 H(+). Its pathway is purine metabolism; IMP biosynthesis via de novo pathway; 5-amino-1-(5-phospho-D-ribosyl)imidazole-4-carboxamide from 5-amino-1-(5-phospho-D-ribosyl)imidazole-4-carboxylate: step 1/2. In Thermotoga maritima (strain ATCC 43589 / DSM 3109 / JCM 10099 / NBRC 100826 / MSB8), this protein is Phosphoribosylaminoimidazole-succinocarboxamide synthase (purC).